The following is a 390-amino-acid chain: Succinyl-diaminopimelate desuccinylase (390 aa).

H74 contacts Zn(2+). Residue D76 is part of the active site. Position 107 (D107) interacts with Zn(2+). The Proton acceptor role is filled by E140. Residues E141, E169, and H363 each coordinate Zn(2+).

This sequence belongs to the peptidase M20A family. DapE subfamily. In terms of assembly, homodimer. Zn(2+) is required as a cofactor. Co(2+) serves as cofactor.

The enzyme catalyses N-succinyl-(2S,6S)-2,6-diaminopimelate + H2O = (2S,6S)-2,6-diaminopimelate + succinate. Its pathway is amino-acid biosynthesis; L-lysine biosynthesis via DAP pathway; LL-2,6-diaminopimelate from (S)-tetrahydrodipicolinate (succinylase route): step 3/3. In terms of biological role, catalyzes the hydrolysis of N-succinyl-L,L-diaminopimelic acid (SDAP), forming succinate and LL-2,6-diaminopimelate (DAP), an intermediate involved in the bacterial biosynthesis of lysine and meso-diaminopimelic acid, an essential component of bacterial cell walls. The chain is Succinyl-diaminopimelate desuccinylase from Bartonella henselae (strain ATCC 49882 / DSM 28221 / CCUG 30454 / Houston 1) (Rochalimaea henselae).